The following is a 731-amino-acid chain: Elongation factor 2 (731 aa).

The 242-residue stretch at 19–260 (KHIRNIGIVA…MVVHHLPNPL (242 aa)) folds into the tr-type G domain. GTP contacts are provided by residues 28-35 (AHIDHGKT), 94-98 (DTPGH), and 148-151 (NKVD). His-597 is subject to Diphthamide.

It belongs to the TRAFAC class translation factor GTPase superfamily. Classic translation factor GTPase family. EF-G/EF-2 subfamily.

The protein localises to the cytoplasm. Its function is as follows. Catalyzes the GTP-dependent ribosomal translocation step during translation elongation. During this step, the ribosome changes from the pre-translocational (PRE) to the post-translocational (POST) state as the newly formed A-site-bound peptidyl-tRNA and P-site-bound deacylated tRNA move to the P and E sites, respectively. Catalyzes the coordinated movement of the two tRNA molecules, the mRNA and conformational changes in the ribosome. This chain is Elongation factor 2, found in Methanoregula boonei (strain DSM 21154 / JCM 14090 / 6A8).